A 49-amino-acid chain; its full sequence is DNA-directed RNA polymerase subunit Rpo12 (49 aa).

3 residues coordinate Zn(2+): cysteine 11, cysteine 27, and cysteine 30.

Belongs to the archaeal Rpo12/eukaryotic RPC10 RNA polymerase subunit family. Part of the RNA polymerase complex. The cofactor is Zn(2+).

The protein resides in the cytoplasm. The enzyme catalyses RNA(n) + a ribonucleoside 5'-triphosphate = RNA(n+1) + diphosphate. DNA-dependent RNA polymerase (RNAP) catalyzes the transcription of DNA into RNA using the four ribonucleoside triphosphates as substrates. This chain is DNA-directed RNA polymerase subunit Rpo12, found in Thermococcus onnurineus (strain NA1).